The sequence spans 631 residues: 1-deoxy-D-xylulose-5-phosphate synthase (631 aa).

Thiamine diphosphate-binding positions include histidine 73 and 114-116 (GHS). Aspartate 145 lines the Mg(2+) pocket. Thiamine diphosphate contacts are provided by residues 146 to 147 (GA), asparagine 174, tyrosine 285, and glutamate 366. Asparagine 174 serves as a coordination point for Mg(2+).

The protein belongs to the transketolase family. DXPS subfamily. In terms of assembly, homodimer. Requires Mg(2+) as cofactor. The cofactor is thiamine diphosphate.

The catalysed reaction is D-glyceraldehyde 3-phosphate + pyruvate + H(+) = 1-deoxy-D-xylulose 5-phosphate + CO2. Its pathway is metabolic intermediate biosynthesis; 1-deoxy-D-xylulose 5-phosphate biosynthesis; 1-deoxy-D-xylulose 5-phosphate from D-glyceraldehyde 3-phosphate and pyruvate: step 1/1. Functionally, catalyzes the acyloin condensation reaction between C atoms 2 and 3 of pyruvate and glyceraldehyde 3-phosphate to yield 1-deoxy-D-xylulose-5-phosphate (DXP). In Desulfitobacterium hafniense (strain Y51), this protein is 1-deoxy-D-xylulose-5-phosphate synthase.